The following is a 406-amino-acid chain: Elongation factor Tu (406 aa).

In terms of domain architecture, tr-type G spans 10–215; that stretch reads KPHVNVGTIG…AIDEYIPTPV (206 aa). A G1 region spans residues 19-26; that stretch reads GHVDHGKT. 19-26 lines the GTP pocket; the sequence is GHVDHGKT. Threonine 26 serves as a coordination point for Mg(2+). The G2 stretch occupies residues 61-65; it reads GITIN. Residues 82–85 form a G3 region; it reads DCPG. Residues 82–86 and 137–140 contribute to the GTP site; these read DCPGH and NKVD. Positions 137-140 are G4; sequence NKVD. The segment at 175 to 177 is G5; sequence SAL.

This sequence belongs to the TRAFAC class translation factor GTPase superfamily. Classic translation factor GTPase family. EF-Tu/EF-1A subfamily. As to quaternary structure, monomer.

It localises to the cytoplasm. It catalyses the reaction GTP + H2O = GDP + phosphate + H(+). In terms of biological role, GTP hydrolase that promotes the GTP-dependent binding of aminoacyl-tRNA to the A-site of ribosomes during protein biosynthesis. The polypeptide is Elongation factor Tu (Thermus aquaticus).